Here is a 753-residue protein sequence, read N- to C-terminus: Lysyl oxidase homolog 3 (753 aa).

An N-terminal signal peptide occupies residues 1–25; the sequence is MRPVSVWQWSPWGLLLCLLCSSCLG. SRCR domains are found at residues 44–145 and 169–282; these read FRLA…VICK and VRIR…VSCV. Intrachain disulfides connect C70–C134, C83–C144, C114–C124, C201–C271, C214–C281, and C248–C258. The N-linked (GlcNAc...) asparagine glycan is linked to N111. Residue N266 is glycosylated (N-linked (GlcNAc...) asparagine). Over residues 290–302 the composition is skewed to low complexity; the sequence is SSGQKKQQQSKPQ. The segment at 290–315 is disordered; it reads SSGQKKQQQSKPQGEARVRLKGGAHP. SRCR domains are found at residues 307–407 and 417–525; these read VRLK…VRCN and IRLS…VICS. 11 disulfides stabilise this stretch: C332-C396, C345-C406, C376-C386, C446-C511, C459-C524, C492-C502, C554-C560, C606-C654, C638-C644, C666-C676, and C713-C727. N-linked (GlcNAc...) asparagine glycosylation is found at N390 and N481. The lysyl-oxidase like stretch occupies residues 529–732; sequence SDLLLHSALV…WVHNCHIGDA (204 aa). Cu cation-binding residues include H607, H609, and H611. N625 carries an N-linked (GlcNAc...) asparagine glycan. A cross-link (lysine tyrosylquinone (Lys-Tyr)) is located at residues 634 to 670; sequence KASFCLEDTECQEDVSKRYECANFGEQGITVGCWDLY. A 2',4',5'-topaquinone modification is found at Y670.

It belongs to the lysyl oxidase family. In terms of assembly, interacts with STAT3. The cofactor is Cu cation. Lysine tyrosylquinone residue is required as a cofactor. In terms of processing, the lysine tyrosylquinone cross-link (LTQ) is generated by condensation of the epsilon-amino group of a lysine with a topaquinone produced by oxidation of tyrosine. As to expression, isoform 1: Predominantly detected in the heart, placenta, lung, and small intestine. Isoform 2: Highly detected in the kidney, pancreas, spleen, and thymus, and is absent in lung. In eye, present in all layers of corneas as well as in the limbus and conjunctiva (at protein level).

It localises to the secreted. It is found in the extracellular space. The protein resides in the cytoplasm. The protein localises to the nucleus. The catalysed reaction is L-lysyl-[protein] + O2 + H2O = (S)-2-amino-6-oxohexanoyl-[protein] + H2O2 + NH4(+). It carries out the reaction N(6)-acetyl-L-lysyl-[protein] + O2 + H2O = acetamide + (S)-2-amino-6-oxohexanoyl-[protein] + H2O2. Its function is as follows. Protein-lysine 6-oxidase that mediates the oxidation of peptidyl lysine residues to allysine in target proteins. Catalyzes the post-translational oxidative deamination of peptidyl lysine residues in precursors of elastin and different types of collagens, a prerequisite in the formation of cross-links between collagens and elastin. Required for somite boundary formation by catalyzing oxidation of fibronectin (FN1), enhancing integrin signaling in myofibers and their adhesion to the myotendinous junction (MTJ). Acts as a regulator of inflammatory response by inhibiting differentiation of naive CD4(+) T-cells into T-helper Th17 or regulatory T-cells (Treg): acts by interacting with STAT3 in the nucleus and catalyzing both deacetylation and oxidation of lysine residues on STAT3, leading to disrupt STAT3 dimerization and inhibit STAT3 transcription activity. Oxidation of lysine residues to allysine on STAT3 preferentially takes place on lysine residues that are acetylated. Also able to catalyze deacetylation of lysine residues on STAT3. In terms of biological role, shows protein-lysine 6-oxidase activity toward elastin and different types of collagens, with the highest activity toward collagen type VIII. Shows protein-lysine 6-oxidase activity toward elastin and different types of collagens, with the highest activity toward collagen type IV. This Homo sapiens (Human) protein is Lysyl oxidase homolog 3.